Reading from the N-terminus, the 288-residue chain is 4-hydroxy-tetrahydrodipicolinate synthase (288 aa).

Thr-42 lines the pyruvate pocket. Residue Tyr-129 is the Proton donor/acceptor of the active site. The active-site Schiff-base intermediate with substrate is the Lys-158. Ile-200 is a pyruvate binding site.

Belongs to the DapA family. As to quaternary structure, homotetramer; dimer of dimers.

It localises to the cytoplasm. The enzyme catalyses L-aspartate 4-semialdehyde + pyruvate = (2S,4S)-4-hydroxy-2,3,4,5-tetrahydrodipicolinate + H2O + H(+). It functions in the pathway amino-acid biosynthesis; L-lysine biosynthesis via DAP pathway; (S)-tetrahydrodipicolinate from L-aspartate: step 3/4. Catalyzes the condensation of (S)-aspartate-beta-semialdehyde [(S)-ASA] and pyruvate to 4-hydroxy-tetrahydrodipicolinate (HTPA). The polypeptide is 4-hydroxy-tetrahydrodipicolinate synthase (Thermosipho melanesiensis (strain DSM 12029 / CIP 104789 / BI429)).